We begin with the raw amino-acid sequence, 243 residues long: UMP-CMP kinase 1 (243 aa).

An ATP-binding site is contributed by 29 to 34; that stretch reads GSGKGT. Positions 49–78 are NMP; it reads SAGDLLREEAKYDTEQGTMIKNLMNEGKLV. A ribonucleoside 5'-phosphate-binding positions include arginine 55, 76-78, and 103-106; these read KLV and GFPR. Residue asparagine 110 participates in CMP binding. An LID region spans residues 141-149; the sequence is NRNQGRDDD. Arginine 142 provides a ligand contact to ATP. 2 residues coordinate a ribonucleoside 5'-phosphate: arginine 146 and arginine 157. An ATP-binding site is contributed by arginine 185.

Belongs to the adenylate kinase family. UMP-CMP kinase subfamily. As to quaternary structure, monomer. Mg(2+) is required as a cofactor.

The protein localises to the cytoplasm. It is found in the nucleus. It carries out the reaction UMP + ATP = UDP + ADP. The enzyme catalyses CMP + ATP = CDP + ADP. The catalysed reaction is dCMP + ATP = dCDP + ADP. Catalyzes the phosphorylation of pyrimidine nucleoside monophosphates at the expense of ATP. Plays an important role in de novo pyrimidine nucleotide biosynthesis. Has preference for UMP and CMP as phosphate acceptors. The protein is UMP-CMP kinase 1 of Oryza sativa subsp. japonica (Rice).